Consider the following 308-residue polypeptide: MKITTIAKTSLALGLLTTGVITTTTQAANATTPSSTKVEAPQSTPPSTKIEAPQSKPNATTPPSTKVEAPQQTANATTPPSTKVTTPPSTNTPQPMQSTKSDTPQSPTTKQVPTEINPKFKDLRAYYTKPSLEFKNEIGIILKKWTTIRFMNVVPDYFIYKIALVGKDDKKYGEGVHRNVDVFVVLEENNYNLEKYSVGGITKSNSKKVDHKAGVRITKEDNKGTISHDVSEFKITKEQISLKELDFKLRKQLIEKNNLYGNVGSGKIVIKMKNGGKYTFELHKKLQENRMADVIDGTNIDNIEVNIK.

Positions 1-30 (MKITTIAKTSLALGLLTTGVITTTTQAANA) are cleaved as a signal peptide. Residues 28 to 117 (ANATTPSSTK…TTKQVPTEIN (90 aa)) form a disordered region. 2 stretches are compositionally biased toward polar residues: residues 33-47 (PSST…TPPS) and 55-76 (SKPN…TANA). The segment covering 77–93 (TTPPSTKVTTPPSTNTP) has biased composition (low complexity). Over residues 94-114 (QPMQSTKSDTPQSPTTKQVPT) the composition is skewed to polar residues. Positions 180 to 278 (VDVFVVLEEN…VIKMKNGGKY (99 aa)) are sialyl Lewis X-binding.

This sequence belongs to the staphylococcal/streptococcal toxin family.

The protein resides in the secreted. Functionally, secreted protein that plays a role in immune innate response inhibition by interfering with host TLR2-mediated pathway. The chain is Staphylococcal superantigen-like 4 from Staphylococcus aureus (strain Newman).